A 303-amino-acid chain; its full sequence is Protein transport protein SEC13-2 (303 aa).

WD repeat units lie at residues 7-46 (AHEG…NSSS), 53-95 (GHEG…GKMQ), 102-143 (VHSA…IAST), 149-202 (AHKF…ETYV), 209-251 (GHKD…KKND), and 261-300 (KFEQ…KWEE).

It belongs to the WD repeat SEC13 family. The COPII coat is composed of at least 5 proteins: the SEC23/24 complex, the SEC13/31 complex, and the protein SAR1. Component of the nuclear pore complex (NPC). NPC constitutes the exclusive means of nucleocytoplasmic transport. NPCs allow the passive diffusion of ions and small molecules and the active, nuclear transport receptor-mediated bidirectional transport of macromolecules such as proteins, RNAs, ribonucleoparticles (RNPs), and ribosomal subunits across the nuclear envelope. Due to its 8-fold rotational symmetry, all subunits are present with 8 copies or multiples thereof.

The protein resides in the cytoplasmic vesicle. It localises to the COPII-coated vesicle membrane. Its subcellular location is the endoplasmic reticulum membrane. It is found in the nucleus. The protein localises to the nuclear pore complex. Its function is as follows. Component of the coat protein complex II (COPII) which promotes the formation of transport vesicles from the endoplasmic reticulum (ER). The coat has two main functions, the physical deformation of the endoplasmic reticulum membrane into vesicles and the selection of cargo molecules. It also functions as a component of the nuclear pore complex (NPC). NPC components, collectively referred to as nucleoporins (NUPs), can play the role of both NPC structural components and of docking or interaction partners for transiently associated nuclear transport factors. SEC13 is required for efficient mRNA export from the nucleus to the cytoplasm and for correct nuclear pore biogenesis and distribution. This is Protein transport protein SEC13-2 (SEC132) from Candida glabrata (strain ATCC 2001 / BCRC 20586 / JCM 3761 / NBRC 0622 / NRRL Y-65 / CBS 138) (Yeast).